Reading from the N-terminus, the 417-residue chain is Diphosphomevalonate decarboxylase 1 (417 aa).

22-25 lines the (R)-5-diphosphomevalonate pocket; that stretch reads YWGK. Positions 39 to 47 match the Peroxisomal targeting signal PTS2 motif; sequence RVSLDPDHL. Residues Arg-77, 160–165, and Thr-216 each bind (R)-5-diphosphomevalonate; that span reads SGSACR.

Belongs to the diphosphomevalonate decarboxylase family. Homodimer.

It localises to the peroxisome. It carries out the reaction (R)-5-diphosphomevalonate + ATP = isopentenyl diphosphate + ADP + phosphate + CO2. The protein operates within isoprenoid biosynthesis; isopentenyl diphosphate biosynthesis via mevalonate pathway; isopentenyl diphosphate from (R)-mevalonate: step 3/3. Performs the first committed step in the biosynthesis of isoprene-containing compounds such as sterols and terpenoids. Component of the triterpene saponins (e.g. ginsenosides or panaxosides) and phytosterols biosynthetic pathways. Catalyzes the conversion of mevalonate diphosphate to isopentenyl diphosphate (IPP). This chain is Diphosphomevalonate decarboxylase 1, found in Panax ginseng (Korean ginseng).